Here is a 133-residue protein sequence, read N- to C-terminus: Holo-[acyl-carrier-protein] synthase (133 aa).

Mg(2+)-binding residues include Asp8 and Glu56.

Belongs to the P-Pant transferase superfamily. AcpS family. Mg(2+) serves as cofactor.

Its subcellular location is the cytoplasm. The catalysed reaction is apo-[ACP] + CoA = holo-[ACP] + adenosine 3',5'-bisphosphate + H(+). In terms of biological role, transfers the 4'-phosphopantetheine moiety from coenzyme A to a Ser of acyl-carrier-protein. In Clostridium perfringens (strain SM101 / Type A), this protein is Holo-[acyl-carrier-protein] synthase.